Consider the following 263-residue polypeptide: Small ribosomal subunit protein eS4 (263 aa).

The S4 RNA-binding domain occupies 42–104 (LPLIIFLRNR…TGEHFRLVYD (63 aa)).

Belongs to the eukaryotic ribosomal protein eS4 family.

The sequence is that of Small ribosomal subunit protein eS4 (RPS4) from Gallus gallus (Chicken).